A 45-amino-acid polypeptide reads, in one-letter code: uncharacterized protein (45 aa).

This is an uncharacterized protein from Archaeoglobus fulgidus (strain ATCC 49558 / DSM 4304 / JCM 9628 / NBRC 100126 / VC-16).